The chain runs to 66 residues: Large ribosomal subunit protein uL29 (66 aa).

The protein belongs to the universal ribosomal protein uL29 family.

The protein is Large ribosomal subunit protein uL29 of Rhizobium rhizogenes (strain K84 / ATCC BAA-868) (Agrobacterium radiobacter).